The following is a 479-amino-acid chain: Probable phosphatidate cytidylyltransferase (479 aa).

Positions 1-28 are enriched in basic and acidic residues; sequence MRTDNIRNRKEQLKKQEKKDFDSSKDEE. The segment at 1–71 is disordered; sequence MRTDNIRNRK…NNNNNNNNIK (71 aa). The Cytoplasmic segment spans residues 1-108; the sequence is MRTDNIRNRK…LAIRSVMGAF (108 aa). A compositionally biased stretch (low complexity) spans 53-69; sequence NKNIINQKTNNNNNNNN. The chain crosses the membrane as a helical span at residues 109–129; sequence MIGFFTIVLSTDHFIVALFVI. At 130-159 the chain is on the extracellular side; sequence ALQLLVFKEMIALRYIEAKEKKIPHFRTLN. The chain crosses the membrane as a helical span at residues 160–180; that stretch reads WFFLFTSFFFFYAKPILITLA. At 181–192 the chain is on the cytoplasmic side; the sequence is NYYPDIFQHFVR. The helical transmembrane segment at 193 to 213 threads the bilayer; sequence YHLWHSFSLYCIGFVLFILTL. Over 214-240 the chain is Extracellular; that stretch reads RKGVYRYQFSQLTWTLMILMMVVVQSN. Residues 241 to 261 traverse the membrane as a helical segment; sequence FLISNIYQGLIWFILPVSIIV. Residues 262 to 293 lie on the Cytoplasmic side of the membrane; it reads CNDIFAYFNGFFLGKKFINRPLMKISPNKTWE. The helical transmembrane segment at 294 to 314 threads the bilayer; that stretch reads GFIGATGWTLLFAYYFCGFLL. Residues 315-375 lie on the Extracellular side of the membrane; the sequence is KYDWIVCPKG…FTYIPIQFHA (61 aa). Residues 376–396 form a helical membrane-spanning segment; that stretch reads LVLALFGSLIAPFGGFFASGI. Topologically, residues 397-479 are cytoplasmic; it reads KRAYKVKDFD…IEFTTGTITA (83 aa).

It belongs to the CDS family.

The protein localises to the membrane. The catalysed reaction is a 1,2-diacyl-sn-glycero-3-phosphate + CTP + H(+) = a CDP-1,2-diacyl-sn-glycerol + diphosphate. Its pathway is phospholipid metabolism; CDP-diacylglycerol biosynthesis; CDP-diacylglycerol from sn-glycerol 3-phosphate: step 3/3. The protein is Probable phosphatidate cytidylyltransferase (cdsA) of Dictyostelium discoideum (Social amoeba).